The chain runs to 770 residues: Jhy protein (770 aa).

Disordered regions lie at residues 1 to 249 (MNKY…SKQY), 295 to 438 (TVQN…SFVS), 493 to 527 (HRHE…PQAE), 595 to 647 (ESQL…KRDV), and 708 to 740 (DYAK…KEGG). Basic and acidic residues predominate over residues 57–71 (SWSDIKDQIQDKDME). Residues 72-85 (PDSLEEDSPSETEE) show a composition bias toward acidic residues. The segment covering 112–134 (HQVEDKYSDLRYDPNWKNKREEG) has biased composition (basic and acidic residues). The span at 218 to 229 (SGLSQYLKSSSS) shows a compositional bias: low complexity. Basic and acidic residues predominate over residues 295 to 314 (TVQNDKEVENTFMDPEDKWH). The span at 340 to 354 (RGQSSDAANGQQPSR) shows a compositional bias: polar residues. A compositionally biased stretch (basic residues) spans 355 to 370 (RTAKARVRKQRKHQKG). Over residues 383–398 (QNNQNNPFQQPQNQRQ) the composition is skewed to low complexity. Over residues 410–438 (AQTNASNPNLQDARTLTHNPKVTSDSFVS) the composition is skewed to polar residues. The segment covering 493–509 (HRHESPSQRAPQSDHHM) has biased composition (basic and acidic residues). 2 stretches are compositionally biased toward basic residues: residues 510–521 (NTHRSTKTKKPA) and 625–642 (GKRH…LKGY).

Expressed in the brain, specifically in hypothalamus, pineal gland, and ependymal cells of the aqueduct of Sylvius, as well as in the choroid plexus of the third ventricle. Expressed in the ependymal cells lining the lateral ventricles (at protein level).

In terms of biological role, required for the normal development of cilia in brain ependymal cells lining the ventricular surfaces. The polypeptide is Jhy protein (Mus musculus (Mouse)).